The chain runs to 281 residues: Pantothenate synthetase (281 aa).

30 to 37 (MGNLHLGH) provides a ligand contact to ATP. Residue histidine 37 is the Proton donor of the active site. Glutamine 61 contacts (R)-pantoate. Glutamine 61 contacts beta-alanine. Position 149-152 (149-152 (GRKD)) interacts with ATP. A (R)-pantoate-binding site is contributed by glutamine 155. Residues isoleucine 178 and 186–189 (MSSR) each bind ATP.

The protein belongs to the pantothenate synthetase family. As to quaternary structure, homodimer.

It localises to the cytoplasm. The enzyme catalyses (R)-pantoate + beta-alanine + ATP = (R)-pantothenate + AMP + diphosphate + H(+). The protein operates within cofactor biosynthesis; (R)-pantothenate biosynthesis; (R)-pantothenate from (R)-pantoate and beta-alanine: step 1/1. In terms of biological role, catalyzes the condensation of pantoate with beta-alanine in an ATP-dependent reaction via a pantoyl-adenylate intermediate. The chain is Pantothenate synthetase from Shewanella woodyi (strain ATCC 51908 / MS32).